A 372-amino-acid chain; its full sequence is Glutamate 5-kinase (372 aa).

Lys-14 lines the ATP pocket. Positions 54, 141, and 153 each coordinate substrate. ATP contacts are provided by residues 173–174 and 215–221; these read TD and TGGMSTK. Residues 280-358 enclose the PUA domain; it reads QGSLVLDAGA…DEIESVLGYD (79 aa).

The protein belongs to the glutamate 5-kinase family.

It is found in the cytoplasm. It carries out the reaction L-glutamate + ATP = L-glutamyl 5-phosphate + ADP. Its pathway is amino-acid biosynthesis; L-proline biosynthesis; L-glutamate 5-semialdehyde from L-glutamate: step 1/2. Its function is as follows. Catalyzes the transfer of a phosphate group to glutamate to form L-glutamate 5-phosphate. The polypeptide is Glutamate 5-kinase (Shewanella oneidensis (strain ATCC 700550 / JCM 31522 / CIP 106686 / LMG 19005 / NCIMB 14063 / MR-1)).